The primary structure comprises 370 residues: Divinyl chlorophyll a/b light-harvesting protein PcbD (370 aa).

A run of 6 helical transmembrane segments spans residues 27-47, 88-108, 140-160, 201-221, 248-268, and 315-335; these read FIASHIGHTGLIAFAAGGSTL, VAAVAIVHLVLSMVYGGGALL, FILGHHLFFFGMACIAFVEWA, VMGGHAFLAFAELTGATIHMV, AVLSWSLAGIGWMAIVAAFWA, and LVNVHYYFGFFFLQGHFWHAL.

This sequence belongs to the PsbB/PsbC family. IsiA/Pcb subfamily. In terms of assembly, the antenna complex consists of divinyl chlorophylls (a and b) and divinyl chlorophyll a/b binding proteins and binds more divinyl chlorophyll b than does the antenna complex from high-light-adapted Prochlorococcus. Divinyl chlorophyll a is required as a cofactor. The cofactor is divinyl chlorophyll b.

The protein resides in the cellular thylakoid membrane. Functionally, the antenna complex functions as a light receptor, it captures and delivers excitation energy to photosystems II and I. The Prochlorales pcb genes are not related to higher plant LHCs. The chain is Divinyl chlorophyll a/b light-harvesting protein PcbD (pcbD) from Prochlorococcus marinus (strain NATL2A).